Consider the following 174-residue polypeptide: UPF0340 protein SAB1998c (174 aa).

It belongs to the UPF0340 family.

This chain is UPF0340 protein SAB1998c, found in Staphylococcus aureus (strain bovine RF122 / ET3-1).